The following is a 138-amino-acid chain: Large ribosomal subunit protein eL14B (138 aa).

S2 is modified (N-acetylserine).

It belongs to the eukaryotic ribosomal protein eL14 family. In terms of assembly, component of the large ribosomal subunit (LSU). Mature yeast ribosomes consist of a small (40S) and a large (60S) subunit. The 40S small subunit contains 1 molecule of ribosomal RNA (18S rRNA) and 33 different proteins (encoded by 57 genes). The large 60S subunit contains 3 rRNA molecules (25S, 5.8S and 5S rRNA) and 46 different proteins (encoded by 81 genes). N-terminally acetylated by acetyltransferase NatA.

The protein resides in the cytoplasm. Its function is as follows. Component of the ribosome, a large ribonucleoprotein complex responsible for the synthesis of proteins in the cell. The small ribosomal subunit (SSU) binds messenger RNAs (mRNAs) and translates the encoded message by selecting cognate aminoacyl-transfer RNA (tRNA) molecules. The large subunit (LSU) contains the ribosomal catalytic site termed the peptidyl transferase center (PTC), which catalyzes the formation of peptide bonds, thereby polymerizing the amino acids delivered by tRNAs into a polypeptide chain. The nascent polypeptides leave the ribosome through a tunnel in the LSU and interact with protein factors that function in enzymatic processing, targeting, and the membrane insertion of nascent chains at the exit of the ribosomal tunnel. The protein is Large ribosomal subunit protein eL14B of Saccharomyces cerevisiae (strain ATCC 204508 / S288c) (Baker's yeast).